An 87-amino-acid polypeptide reads, in one-letter code: MSNLNPGELGDLTDASKKEIAAYLDAENSKQKVRTSINQFTDICFKKCISRVDNGNLSSQEEECLASCVNRFLDTNIRVVRGLQNSQ.

Residues 44-68 (CFKKCISRVDNGNLSSQEEECLASC) carry the Twin CX3C motif motif. Disulfide bonds link cysteine 44/cysteine 68 and cysteine 48/cysteine 64.

This sequence belongs to the small Tim family. In terms of assembly, heterohexamer; composed of 3 copies of TIM8 and 3 copies of TIM13, named soluble 70 kDa complex. Associates with the TIM22 complex, whose core is composed of TIM22 and TIM54. Interacts with the transmembrane regions of multi-pass transmembrane proteins in transit.

The protein resides in the mitochondrion inner membrane. Functionally, mitochondrial intermembrane chaperone that participates in the import and insertion of some multi-pass transmembrane proteins into the mitochondrial inner membrane. Also required for the transfer of beta-barrel precursors from the TOM complex to the sorting and assembly machinery (SAM complex) of the outer membrane. Acts as a chaperone-like protein that protects the hydrophobic precursors from aggregation and guide them through the mitochondrial intermembrane space. The TIM8-TIM13 complex is non essential and only mediates the import of few proteins, while the predominant TIM9-TIM10 70 kDa complex is crucial and mediates the import of much more proteins. This chain is Mitochondrial import inner membrane translocase subunit TIM8 (TIM8), found in Candida glabrata (strain ATCC 2001 / BCRC 20586 / JCM 3761 / NBRC 0622 / NRRL Y-65 / CBS 138) (Yeast).